The primary structure comprises 214 residues: Phosphatidylserine decarboxylase proenzyme (214 aa).

Residue Ser182 is the Schiff-base intermediate with substrate; via pyruvic acid of the active site. A Pyruvic acid (Ser); by autocatalysis modification is found at Ser182.

The protein belongs to the phosphatidylserine decarboxylase family. PSD-A subfamily. In terms of assembly, heterodimer of a large membrane-associated beta subunit and a small pyruvoyl-containing alpha subunit. The cofactor is pyruvate. Is synthesized initially as an inactive proenzyme. Formation of the active enzyme involves a self-maturation process in which the active site pyruvoyl group is generated from an internal serine residue via an autocatalytic post-translational modification. Two non-identical subunits are generated from the proenzyme in this reaction, and the pyruvate is formed at the N-terminus of the alpha chain, which is derived from the carboxyl end of the proenzyme. The post-translation cleavage follows an unusual pathway, termed non-hydrolytic serinolysis, in which the side chain hydroxyl group of the serine supplies its oxygen atom to form the C-terminus of the beta chain, while the remainder of the serine residue undergoes an oxidative deamination to produce ammonia and the pyruvoyl prosthetic group on the alpha chain.

It is found in the cell membrane. The enzyme catalyses a 1,2-diacyl-sn-glycero-3-phospho-L-serine + H(+) = a 1,2-diacyl-sn-glycero-3-phosphoethanolamine + CO2. The protein operates within phospholipid metabolism; phosphatidylethanolamine biosynthesis; phosphatidylethanolamine from CDP-diacylglycerol: step 2/2. Functionally, catalyzes the formation of phosphatidylethanolamine (PtdEtn) from phosphatidylserine (PtdSer). This chain is Phosphatidylserine decarboxylase proenzyme, found in Burkholderia cenocepacia (strain ATCC BAA-245 / DSM 16553 / LMG 16656 / NCTC 13227 / J2315 / CF5610) (Burkholderia cepacia (strain J2315)).